We begin with the raw amino-acid sequence, 1201 residues long: Potassium channel subfamily T member 1 (1201 aa).

The interval 1–28 (MARAKLKNSPSESNSHVKTVPPATTEDV) is disordered. Topologically, residues 1 to 92 (MARAKLKNSP…FFIKNQRSSL (92 aa)) are cytoplasmic. The span at 8–17 (NSPSESNSHV) shows a compositional bias: polar residues. A helical membrane pass occupies residues 93 to 115 (RIRLFNFSLKLLTCLLYIVRVLL). Residues 116–152 (DNPEEGIGCWECEKQNYTLFNQSTKINWSHIFWVDRK) are Extracellular-facing. N-linked (GlcNAc...) asparagine glycosylation is found at N131 and N136. Residues 153–175 (LPLWAVQVSIALISFLETMLLIY) form a helical membrane-spanning segment. At 176-184 (LSYKGNIWE) the chain is on the cytoplasmic side. Residues 185-206 (QIFRISFILEMINTVPFIITIF) traverse the membrane as a helical segment. The Extracellular segment spans residues 207–216 (WPPLRNLFIP). The helical transmembrane segment at 217–229 (VFLNCWLAKYALE) threads the bilayer. The Cytoplasmic segment spans residues 230–249 (NMINDLHRAIQRTQSAMFNQ). Residues 250–272 (VLILICTLLCLVFTGTCGIQHLE) form a helical membrane-spanning segment. Over 273–279 (RAGEKLS) the chain is Extracellular. An intramembrane region (pore-forming) is located at residues 280 to 300 (LFKSFYFCIVTFSTVGYGDVT). V294 and G295 together coordinate K(+). Residues 301-304 (PKIW) are Extracellular-facing. The chain crosses the membrane as a helical span at residues 305-326 (PSQLLVVIMICVALVVLPLQFE). At 327 to 1201 (ELVYLWMERQ…NPETRDETQL (875 aa)) the chain is on the cytoplasmic side. In terms of domain architecture, RCK N-terminal 1 spans 350 to 486 (EKHVVLCVSS…FHVKFADHVV (137 aa)). Residues L511, H514, S536, and N538 each contribute to the Na(+) site. Zn(2+) contacts are provided by C750 and C751. K(+) contacts are provided by R753 and K756. Residues R753 and K756 each coordinate Na(+). Zn(2+)-binding residues include C758 and H760. 3 residues coordinate K(+): N761, Y769, and G770. A Na(+)-binding site is contributed by F771. One can recognise an RCK N-terminal 2 domain in the interval 773-913 (NKLIIVSAET…QFRAKDSYSL (141 aa)). K(+) contacts are provided by S779, L810, D812, G834, and D857. Residues 1175-1201 (NDGHSRKSSCSNKLGPCNPETRDETQL) form a disordered region.

This sequence belongs to the potassium channel family. Calcium-activated (TC 1.A.1.3) subfamily. KCa4.1/KCNT1 sub-subfamily. As to quaternary structure, homotetramer; which constitutes the Na(+)-activated K(+) channel. Interacts with KCNT2; these heterodimer channels differ from the homomers in their unitary conductance, kinetic behavior, subcellular localization, and response to activation of protein kinase C. Post-translationally, phosphorylated by protein kinase C. Phosphorylation of the C-terminal domain increases channel activity.

It localises to the cell membrane. The enzyme catalyses K(+)(in) = K(+)(out). Activated by high intracellular Na(+). In addition to activation by Na(+), is cooperatively activated by intracellular Cl(-) levels. Inhibited by Zn(2+). Activated upon stimulation of G-protein coupled receptors, such as CHRM1 and GRIA1. In terms of biological role, sodium-activated K(+) channel. Acts as an important mediator of neuronal membrane excitability. Contributes to the delayed outward currents. Regulates of neuronal bursting in sensory neurons. Contributes to synaptic development and plasticity. In Gallus gallus (Chicken), this protein is Potassium channel subfamily T member 1 (KCNT1).